The following is a 1006-amino-acid chain: DNA polymerase (1006 aa).

It belongs to the DNA polymerase type-B family. As to quaternary structure, interacts with OPG148. Component of the Uracil-DNA glycosylase(UDG)-OPG148-polymerase complex; OPG148 and OPG116/UDG form a heterodimeric processivity factor that associates with OPG071 to form the processive polymerase holoenzyme.

It carries out the reaction DNA(n) + a 2'-deoxyribonucleoside 5'-triphosphate = DNA(n+1) + diphosphate. Its function is as follows. Catalyzes DNA synthesis. Acquires processivity by associating with a heterodimeric processivity factor comprised of the viral OPG148 and OPG116 proteins, thereby forming the DNA polymerase holoenzyme. Displays 3'- to 5' exonuclease activity. Might participate in viral DNA recombination. Does not perform OPG116/D4synthesis across an abasic site. The protein is DNA polymerase (OPG071) of Monkeypox virus.